Reading from the N-terminus, the 363-residue chain is 3-dehydroquinate synthase (363 aa).

Residues 70 to 75 (SGETSK), 104 to 108 (GVIGD), 128 to 129 (TT), Lys-141, Lys-150, and 168 to 171 (TLDT) contribute to the NAD(+) site. The Zn(2+) site is built by Glu-183, His-245, and His-262.

The protein belongs to the sugar phosphate cyclases superfamily. Dehydroquinate synthase family. The cofactor is Co(2+). It depends on Zn(2+) as a cofactor. NAD(+) is required as a cofactor.

It is found in the cytoplasm. The catalysed reaction is 7-phospho-2-dehydro-3-deoxy-D-arabino-heptonate = 3-dehydroquinate + phosphate. The protein operates within metabolic intermediate biosynthesis; chorismate biosynthesis; chorismate from D-erythrose 4-phosphate and phosphoenolpyruvate: step 2/7. In terms of biological role, catalyzes the conversion of 3-deoxy-D-arabino-heptulosonate 7-phosphate (DAHP) to dehydroquinate (DHQ). This Alkaliphilus oremlandii (strain OhILAs) (Clostridium oremlandii (strain OhILAs)) protein is 3-dehydroquinate synthase.